The primary structure comprises 298 residues: Beta-soluble NSF attachment protein (298 aa).

Belongs to the SNAP family. In terms of assembly, interacts with PRKCABP, and disrupts the interaction between GRIA2 and PRKCABP, leading to the internalization of GRIA2.

It is found in the membrane. In terms of biological role, required for vesicular transport between the endoplasmic reticulum and the Golgi apparatus. This is Beta-soluble NSF attachment protein (NAPB) from Homo sapiens (Human).